A 279-amino-acid chain; its full sequence is MSVRKLKPITPGQRFRVVNGYDAITTDKPEKSLLAPIKKSGGRNSQGKMTMRYKGGGHKKRYRVIDFKRDKQGIPATVASIEYDPNRTAFIALLNYQDGEKRYIIAQNGLQVDQNVVSSNEAATPEIGNAMPLANIPLGTVISCIELRPGQGAVMARSAGAFAQLLAREGKYATIKLPSGEIRRVLALCMATIGAVSNSDHQLMIGGKAGRSRWLGIRPRTRPVAMNPVDHPMGGGEGRASGGHPRSRKGLPAKGFKTRSRTKASNKYIVERRKTRKKK.

A disordered region spans residues 223–279; that stretch reads PVAMNPVDHPMGGGEGRASGGHPRSRKGLPAKGFKTRSRTKASNKYIVERRKTRKKK. Residues 245 to 264 show a composition bias toward basic residues; that stretch reads PRSRKGLPAKGFKTRSRTKA.

The protein belongs to the universal ribosomal protein uL2 family. As to quaternary structure, part of the 50S ribosomal subunit. Forms a bridge to the 30S subunit in the 70S ribosome.

One of the primary rRNA binding proteins. Required for association of the 30S and 50S subunits to form the 70S ribosome, for tRNA binding and peptide bond formation. It has been suggested to have peptidyltransferase activity; this is somewhat controversial. Makes several contacts with the 16S rRNA in the 70S ribosome. This Christiangramia forsetii (strain DSM 17595 / CGMCC 1.15422 / KT0803) (Gramella forsetii) protein is Large ribosomal subunit protein uL2.